The chain runs to 247 residues: Chymase (247 aa).

The first 19 residues, 1-19 (MNLHALCLLLLLLGSSTKA), serve as a signal peptide directing secretion. The propeptide at 20-21 (GE) is activation peptide. In terms of domain architecture, Peptidase S1 spans 22–245 (IIGGTECIPH…YRPWINKILR (224 aa)). Cys51 and Cys67 are oxidised to a cystine. Residue His66 is the Charge relay system of the active site. An N-linked (GlcNAc...) asparagine glycan is attached at Asn80. Residue Asp110 is the Charge relay system of the active site. 2 disulfides stabilise this stretch: Cys144–Cys209 and Cys175–Cys188. Ser203 acts as the Charge relay system in catalysis.

This sequence belongs to the peptidase S1 family. Granzyme subfamily. In terms of tissue distribution, mast cells.

Its subcellular location is the secreted. The protein resides in the cytoplasmic granule. The catalysed reaction is Preferential cleavage: Phe-|-Xaa &gt; Tyr-|-Xaa &gt; Trp-|-Xaa &gt; Leu-|-Xaa.. Major secreted protease of mast cells with suspected roles in vasoactive peptide generation, extracellular matrix degradation, and regulation of gland secretion. This chain is Chymase (Cma1), found in Rattus norvegicus (Rat).